The sequence spans 356 residues: Dynein axonemal heavy chain 12 (356 aa).

ANK repeat units follow at residues 17–46 (DSSS…DANV), 50–81 (SGHL…AIKR), 82–111 (SGIS…DVNF), 124–153 (HRKS…MPNQ), 154–183 (DPVN…NVNY), and 185–218 (CRVN…DTEL). Positions 290-345 (WSEIHFILTNPRSLKHLCRLKIRKCMGRLRLRCPVFMSFLPLPSRLKAYVLYKEYD) constitute an SOCS box domain.

This sequence belongs to the dynein heavy chain family. As to quaternary structure, consists of at least two heavy chains and a number of intermediate and light chains.

The protein resides in the cytoplasm. Its subcellular location is the cytoskeleton. The protein localises to the cilium axoneme. Its pathway is protein modification; protein ubiquitination. In terms of biological role, force generating protein of respiratory cilia. Produces force towards the minus ends of microtubules. Dynein has ATPase activity; the force-producing power stroke is thought to occur on release of ADP. Involved in sperm motility; implicated in sperm flagellar assembly. Its function is as follows. May be a substrate-recognition component of a SCF-like ECS (Elongin-Cullin-SOCS-box protein) E3 ubiquitin-protein ligase complex which mediates the ubiquitination and subsequent proteasomal degradation of target proteins. In Bos taurus (Bovine), this protein is Dynein axonemal heavy chain 12 (DNAH12).